A 213-amino-acid polypeptide reads, in one-letter code: Citrate synthase, mitochondrial (213 aa).

The active site involves His-74. Residues Lys-94 and Lys-100 each carry the N6-acetyllysine; alternate modification. N6-succinyllysine; alternate is present on residues Lys-94 and Lys-100. His-120 is a catalytic residue. Arg-129 is an oxaloacetate binding site. An N6-acetyllysine; alternate modification is found at Lys-148. Lys-148 is subject to N6-succinyllysine; alternate. Residue Lys-155 is modified to N6-acetyllysine. Position 166 is an N6-acetyllysine; alternate (Lys-166). At Lys-166 the chain carries N6-succinyllysine; alternate. At Lys-168 the chain carries N6,N6,N6-trimethyllysine. Residue Asp-175 is part of the active site. An oxaloacetate-binding site is contributed by Arg-201.

The protein belongs to the citrate synthase family. As to quaternary structure, homodimer. In terms of processing, in response to mitochondrial stress, the precursor protein is ubiquitinated by the SIFI complex in the cytoplasm before mitochondrial import, leading to its degradation. Within the SIFI complex, UBR4 initiates ubiquitin chain that are further elongated or branched by KCMF1.

Its subcellular location is the mitochondrion matrix. It carries out the reaction oxaloacetate + acetyl-CoA + H2O = citrate + CoA + H(+). Its pathway is carbohydrate metabolism; tricarboxylic acid cycle; isocitrate from oxaloacetate: step 1/2. Key enzyme of the Krebs tricarboxylic acid cycle which catalyzes the synthesis of citrate from acetyl coenzyme A and oxaloacetate. This Mesocricetus auratus (Golden hamster) protein is Citrate synthase, mitochondrial.